Reading from the N-terminus, the 118-residue chain is Large ribosomal subunit protein bL19 (118 aa).

The protein belongs to the bacterial ribosomal protein bL19 family.

Functionally, this protein is located at the 30S-50S ribosomal subunit interface and may play a role in the structure and function of the aminoacyl-tRNA binding site. The sequence is that of Large ribosomal subunit protein bL19 from Wolinella succinogenes (strain ATCC 29543 / DSM 1740 / CCUG 13145 / JCM 31913 / LMG 7466 / NCTC 11488 / FDC 602W) (Vibrio succinogenes).